A 426-amino-acid polypeptide reads, in one-letter code: Dynein regulatory complex protein 10 (426 aa).

2 disordered regions span residues threonine 18–leucine 37 and serine 399–lysine 426. The IQ domain occupies methionine 377 to glycine 406. Over residues serine 399–alanine 408 the composition is skewed to basic residues. The span at lysine 409–lysine 426 shows a compositional bias: basic and acidic residues.

Belongs to the DRC10 family. As to quaternary structure, component of the nexin-dynein regulatory complex (N-DRC). Interacts with CFAP52.

The protein localises to the cytoplasm. The protein resides in the cytoskeleton. Its subcellular location is the flagellum axoneme. Its function is as follows. Component of the nexin-dynein regulatory complex (N-DRC), a key regulator of ciliary/flagellar motility which maintains the alignment and integrity of the distal axoneme and regulates microtubule sliding in motile axonemes. This is Dynein regulatory complex protein 10 (IQCD) from Macaca fascicularis (Crab-eating macaque).